Reading from the N-terminus, the 618-residue chain is tRNA endonuclease vms-1 (618 aa).

A C2H2-type zinc finger spans residues 59 to 85 (DQCTTCNCPVDFGDRAVLLEHYQSLFH). A VLRF1 domain is found at 170-311 (RPFDCAIFLW…SDCWQRLQQV (142 aa)). The active site involves glutamine 213. 2 ANK repeats span residues 437–466 (NRSTFLHVSAANDARKCLKYFLEEVNCDSS) and 470–496 (GAGLPPYSSSANSDVKSIFIDYRVKNE). The segment at 502-539 (ARTHIPEPKKKVELTEEQEREQAERKKEKKARQKEKEK) is disordered. The segment covering 505-515 (HIPEPKKKVEL) has biased composition (basic and acidic residues). Positions 510–557 (KKKVELTEEQEREQAERKKEKKARQKEKEKLKKEIAKRDVEEMEERQK) form a coiled coil.

This sequence belongs to the ANKZF1/VMS1 family. In terms of tissue distribution, in larval stages and in adults, expressed in intestinal cells, specific neurons in the head and the tail, and in the ventral nerve cord.

Its subcellular location is the cytoplasm. It is found in the mitochondrion. In terms of biological role, endonuclease that cleaves polypeptidyl-tRNAs downstream of the ribosome-associated quality control (RQC) pathway to release incompletely synthesized polypeptides for degradation. The RQC pathway disassembles aberrantly stalled translation complexes to recycle or degrade the constituent parts. Dispensable for viability and growth but is required for protection against oxidative stress and for wild-type life span. The chain is tRNA endonuclease vms-1 (vms-1) from Caenorhabditis elegans.